The chain runs to 204 residues: Putative AgrB-like protein (204 aa).

Helical transmembrane passes span 40 to 60 (IILI…ATGL), 87 to 107 (LNCT…FQNI), 111 to 131 (NWIV…FAPA), and 156 to 176 (LILT…LIMV).

Belongs to the AgrB family.

It localises to the cell membrane. May be involved in the proteolytic processing of a quorum sensing system signal molecule precursor. In Listeria welshimeri serovar 6b (strain ATCC 35897 / DSM 20650 / CCUG 15529 / CIP 8149 / NCTC 11857 / SLCC 5334 / V8), this protein is Putative AgrB-like protein.